A 194-amino-acid chain; its full sequence is IMP cyclohydrolase (194 aa).

Belongs to the archaeal IMP cyclohydrolase family.

The enzyme catalyses IMP + H2O = 5-formamido-1-(5-phospho-D-ribosyl)imidazole-4-carboxamide. The protein operates within purine metabolism; IMP biosynthesis via de novo pathway; IMP from 5-formamido-1-(5-phospho-D-ribosyl)imidazole-4-carboxamide: step 1/1. Its function is as follows. Catalyzes the cyclization of 5-formylamidoimidazole-4-carboxamide ribonucleotide to IMP. This Halobacterium salinarum (strain ATCC 29341 / DSM 671 / R1) protein is IMP cyclohydrolase.